The sequence spans 188 residues: NANOG neighbor homeobox (188 aa).

Residues Glu-28–Lys-106 are disordered. Residues Gln-57–Lys-106 are compositionally biased toward basic and acidic residues. The homeobox DNA-binding region spans Gln-102–Met-161.

It localises to the nucleus. This chain is NANOG neighbor homeobox (NANOGNB), found in Homo sapiens (Human).